An 82-amino-acid chain; its full sequence is Small ribosomal subunit protein bS16 (82 aa).

Belongs to the bacterial ribosomal protein bS16 family.

The protein is Small ribosomal subunit protein bS16 of Francisella philomiragia subsp. philomiragia (strain ATCC 25017 / CCUG 19701 / FSC 153 / O#319-036).